Consider the following 291-residue polypeptide: GTPase Era (291 aa).

The region spanning 2-167 (KSGFVSIIGR…LDEIVKYLDK (166 aa)) is the Era-type G domain. The G1 stretch occupies residues 10–17 (GRTNAGKS). Residue 10–17 (GRTNAGKS) coordinates GTP. The interval 36 to 40 (NATRR) is G2. The interval 57–60 (DTPG) is G3. Residues 57 to 61 (DTPGL) and 116 to 119 (NKVD) contribute to the GTP site. The tract at residues 116-119 (NKVD) is G4. A G5 region spans residues 146 to 148 (YSS). Residues 186 to 274 (YRDFILESIY…LLKLFVTVKK (89 aa)) enclose the KH type-2 domain.

It belongs to the TRAFAC class TrmE-Era-EngA-EngB-Septin-like GTPase superfamily. Era GTPase family. Monomer.

The protein resides in the cytoplasm. It localises to the cell inner membrane. An essential GTPase that binds both GDP and GTP, with rapid nucleotide exchange. Plays a role in 16S rRNA processing and 30S ribosomal subunit biogenesis and possibly also in cell cycle regulation and energy metabolism. In Campylobacter jejuni subsp. jejuni serotype O:6 (strain 81116 / NCTC 11828), this protein is GTPase Era.